A 471-amino-acid chain; its full sequence is Mitochondrial distribution and morphology protein 10 (471 aa).

Disordered regions lie at residues 272-291, 374-394, and 436-455; these read TEMPSSSSSTSSTTTTSNHG, ADTPGVPPVEPPSTHNRDEEN, and SWAANSTAAGGGQSVGGGVS. Positions 276–288 are enriched in low complexity; the sequence is SSSSSTSSTTTTS. The span at 444–455 shows a compositional bias: gly residues; it reads AGGGQSVGGGVS.

Belongs to the MDM10 family. Component of the ER-mitochondria encounter structure (ERMES) or MDM complex, composed of mmm1, mdm10, mdm12 and mdm34. Associates with the mitochondrial outer membrane sorting assembly machinery SAM(core) complex.

It is found in the mitochondrion outer membrane. In terms of biological role, component of the ERMES/MDM complex, which serves as a molecular tether to connect the endoplasmic reticulum and mitochondria. Components of this complex are involved in the control of mitochondrial shape and protein biogenesis and may function in phospholipid exchange. mdm10 is involved in the late assembly steps of the general translocase of the mitochondrial outer membrane (TOM complex). Functions in the tom40-specific route of the assembly of outer membrane beta-barrel proteins, including the association of tom40 with the receptor tom22 and small TOM proteins. Can associate with the SAM(core) complex as well as the mdm12-mmm1 complex, both involved in late steps of the major beta-barrel assembly pathway, that is responsible for biogenesis of all outer membrane beta-barrel proteins. May act as a switch that shuttles between both complexes and channels precursor proteins into the tom40-specific pathway. Plays a role in mitochondrial morphology and in the inheritance of mitochondria. The protein is Mitochondrial distribution and morphology protein 10 (mdmB) of Neosartorya fischeri (strain ATCC 1020 / DSM 3700 / CBS 544.65 / FGSC A1164 / JCM 1740 / NRRL 181 / WB 181) (Aspergillus fischerianus).